The sequence spans 857 residues: MTNEQLQRKHQSLATLITRIIFLVLGLITIGIFIQSYYFSNKIIKQEVMLTKQQTSALVKSLFNNHLSILQIHHDSNSKNEAIRRFFLDGDDEKLEYYFLSMDQADPTHTPEFRFLTTGEGLLWDDGNAHFYGVNEVLLEKISQSVLFGNNWHFMSLHTLMGLRNMLVRRSPVIDTTTGEVLGQYYISVVLDNNFPLVEMLESGSNSDNIVMLVGDKVISHSLSGNEPYDLDSLLAMRDEPSAFDDCLISHTPIEINSTDTLVSILAIQENSHVASLQRQHYLGLATSVVLMLMLSLAIRSWIQNRVANALESLMAYSRFAGTGEKYERFNGSDILEFAHIGHTLENTFEQLESQRRSFQDLFNFALSPMMVWSESGLLIQMNPAAMKELGIEHASPQDFSNPLFQLFKLKLSPHLKMAAQGATLTGINVPIGEKIFRWNLSPIVVENGISGIIVQGQDITTLIDAEKQSNLARREAEQSAKTRADFLAKMSHEIRTPLNGILGIAQLLKRSVNDAENLKQVDVLCNSGEHLLAVLNDILDFSKIEQGKFNIKKRDFNFYDTLNTLENIYRPICREKGVSFEIHNQIPLDCQLHTDQVRLNQIMFNLISNAVKFTPAGRIEVSFKLEQFARSEHSILSIQVSDTGIGIDESKLESIFEPFVQADSLSTREYGGSGLGLTIVKNLVEMLEGEISVQSELCKGSTFYLSIPVEKGECEEQKTPTNPKPEQLFGQGLKVLLVEDNHTNAFILKAFCQKYQMSVEWVQDGTQALEKLKEHAFDLILMDNQLPKMGGIEATREIRETLKLGTPIYACTADAQESTKQEFLSAGANRVIVKPIKEQELHDELLHFKAHYWVEH.

2 helical membrane-spanning segments follow: residues 20-40 (IIFL…YYFS) and 283-303 (LGLA…RSWI). Positions 490–712 (KMSHEIRTPL…TFYLSIPVEK (223 aa)) constitute a Histidine kinase domain. His-493 bears the Phosphohistidine; by autocatalysis mark. Positions 735 to 850 (KVLLVEDNHT…ELHDELLHFK (116 aa)) constitute a Response regulatory domain. The residue at position 784 (Asp-784) is a 4-aspartylphosphate.

As to quaternary structure, binds the complex formed by the autoinducer and LuxP.

The protein localises to the cell inner membrane. The enzyme catalyses ATP + protein L-histidine = ADP + protein N-phospho-L-histidine.. Functionally, at low cell density, in absence of autoinducer has a kinase activity, and autophosphorylates on a histidine residue. The phosphoryl group is then transferred to an aspartate residue in the response regulator domain. The phosphoryl group is transferred to LuxU, and ultimately to LuxO. At high cell density, in the presence of autoinducer, the kinase activity is inactivated, and the response regulator domain has a phosphatase activity. This chain is Autoinducer 2 sensor kinase/phosphatase LuxQ (luxQ), found in Vibrio vulnificus (strain YJ016).